Reading from the N-terminus, the 430-residue chain is Adenylosuccinate synthetase (430 aa).

GTP contacts are provided by residues 12–18 (GDEGKGK) and 40–42 (GHT). Asp-13 serves as the catalytic Proton acceptor. The Mg(2+) site is built by Asp-13 and Gly-40. IMP-binding positions include 13–16 (DEGK), 38–41 (NAGH), Thr-130, Arg-144, Gln-224, Thr-239, and Arg-303. His-41 functions as the Proton donor in the catalytic mechanism. Position 299–305 (299–305 (TNTGRAR)) interacts with substrate. GTP is bound by residues Arg-305, 331–333 (KLD), and 413–415 (STS).

The protein belongs to the adenylosuccinate synthetase family. In terms of assembly, homodimer. Requires Mg(2+) as cofactor.

It localises to the cytoplasm. The enzyme catalyses IMP + L-aspartate + GTP = N(6)-(1,2-dicarboxyethyl)-AMP + GDP + phosphate + 2 H(+). It participates in purine metabolism; AMP biosynthesis via de novo pathway; AMP from IMP: step 1/2. Plays an important role in the de novo pathway of purine nucleotide biosynthesis. Catalyzes the first committed step in the biosynthesis of AMP from IMP. The protein is Adenylosuccinate synthetase of Hyphomonas neptunium (strain ATCC 15444).